A 207-amino-acid polypeptide reads, in one-letter code: 8-oxoguanine DNA glycosylase/AP lyase (207 aa).

Catalysis depends on residues Lys129 and Asp147.

It belongs to the type-2 OGG1 family.

It catalyses the reaction 2'-deoxyribonucleotide-(2'-deoxyribose 5'-phosphate)-2'-deoxyribonucleotide-DNA = a 3'-end 2'-deoxyribonucleotide-(2,3-dehydro-2,3-deoxyribose 5'-phosphate)-DNA + a 5'-end 5'-phospho-2'-deoxyribonucleoside-DNA + H(+). Functionally, catalyzes the excision of an oxidatively damaged form of guanine (7,8-dihydro-8-oxoguanine = 8-oxoG) from DNA. Also cleaves the DNA backbone at apurinic/apyrimidinic sites (AP sites). The polypeptide is 8-oxoguanine DNA glycosylase/AP lyase (Thermotoga sp. (strain RQ2)).